The following is a 903-amino-acid chain: Alanine--tRNA ligase (903 aa).

4 residues coordinate Zn(2+): H591, H595, C695, and H699.

It belongs to the class-II aminoacyl-tRNA synthetase family. Requires Zn(2+) as cofactor.

It localises to the cytoplasm. The enzyme catalyses tRNA(Ala) + L-alanine + ATP = L-alanyl-tRNA(Ala) + AMP + diphosphate. In terms of biological role, catalyzes the attachment of alanine to tRNA(Ala) in a two-step reaction: alanine is first activated by ATP to form Ala-AMP and then transferred to the acceptor end of tRNA(Ala). Also edits incorrectly charged Ser-tRNA(Ala) and Gly-tRNA(Ala) via its editing domain. The protein is Alanine--tRNA ligase of Methanosphaera stadtmanae (strain ATCC 43021 / DSM 3091 / JCM 11832 / MCB-3).